An 81-amino-acid chain; its full sequence is uncharacterized protein (81 aa).

The transit peptide at Met-1–Ala-20 directs the protein to the mitochondrion. The interval Tyr-27–Gln-53 is disordered. Residues Gly-28–Gln-53 show a composition bias toward low complexity. The chain crosses the membrane as a helical span at residues Ile-59–Met-79.

The protein resides in the mitochondrion membrane. This is an uncharacterized protein from Schizosaccharomyces pombe (strain 972 / ATCC 24843) (Fission yeast).